A 645-amino-acid chain; its full sequence is MLKFRIRPVRHIRCYKRHAYFLRYNHTTTPAQKLQAQIEQIPLENYRNFSIVAHVDHGKSTLSDRLLEITHVIDPNARNKQVLDKLEVERERGITIKAQTCSMFYKDKRTGKNYLLHLIDTPGHVDFRGEVSRSYASCGGAILLVDASQGIQAQTVANFYLAFSLGLKLIPVINKIDLNFTDVKQVKDQIVNNFELPEEDIIGVSAKTGLNVEELLLPAIIDRIPPPTGRPDKPFRALLVDSWYDAYLGAVLLVNIVDGSVRKNDKVICAQTKEKYEVKDIGIMYPDRTSTGTLKTGQVGYLVLGMKDSKEAKIGDTIMHLSKVNETEVLPGFEEQKPMVFVGAFPADGIEFKAMDDDMSRLVLNDRSVTLERETSNALGQGWRLGFLGSLHASVFRERLEKEYGSKLIITQPTVPYLVEFTDGKKKLITNPDEFPDGATKRVNVAAFHEPFIEAVMTLPQEYLGSVIRLCDSNRGEQIDITYLNTNGQVMLKYYLPLSHLVDDFFGKLKSVSRGFASLDYEDAGYRISDVVKLQLLVNGNAIDALSRVLHKSEVERVGREWVKKFKEYVKSQLYEVVIQARANNKIIARETIKARRKDVLQKLHASDVSRRKKLLAKQKEGKKHMKTVGNIQINQEAYQAFLRR.

The tr-type G domain occupies 44 to 228; sequence ENYRNFSIVA…AIIDRIPPPT (185 aa). Residues 53-60, 120-124, and 174-177 contribute to the GTP site; these read AHVDHGKS, DTPGH, and NKID.

The protein belongs to the TRAFAC class translation factor GTPase superfamily. Classic translation factor GTPase family. LepA subfamily.

It localises to the mitochondrion inner membrane. It carries out the reaction GTP + H2O = GDP + phosphate + H(+). Promotes mitochondrial protein synthesis. May act as a fidelity factor of the translation reaction, by catalyzing a one-codon backward translocation of tRNAs on improperly translocated ribosomes. Binds to mitochondrial ribosomes in a GTP-dependent manner. This Saccharomyces cerevisiae (strain ATCC 204508 / S288c) (Baker's yeast) protein is Translation factor GUF1, mitochondrial.